Consider the following 202-residue polypeptide: Large ribosomal subunit protein bL9 (202 aa).

The segment at 176–202 (AAGEFFDPDAQHDDEPAAEDDQNAEEK) is disordered. Acidic residues predominate over residues 191–202 (PAAEDDQNAEEK).

The protein belongs to the bacterial ribosomal protein bL9 family.

In terms of biological role, binds to the 23S rRNA. This Nitrobacter winogradskyi (strain ATCC 25391 / DSM 10237 / CIP 104748 / NCIMB 11846 / Nb-255) protein is Large ribosomal subunit protein bL9.